Consider the following 867-residue polypeptide: RNA-directed RNA polymerase (867 aa).

249–256 is a binding site for GTP; that stretch reads GLPFIGKT. One can recognise a RdRp catalytic domain in the interval 387 to 591; that stretch reads LIYADNIYIY…DKERLLSSAA (205 aa). The segment at 845 to 867 is disordered; it reads EGALTKNARKMKKRREKARGINH. Positions 851-867 are enriched in basic residues; it reads NARKMKKRREKARGINH.

Interacts with VP3 in the cytoplasm. Post-translationally, may exist in multiple phosphorylated forms.

The protein localises to the virion. It carries out the reaction RNA(n) + a ribonucleoside 5'-triphosphate = RNA(n+1) + diphosphate. Functionally, RNA-dependent RNA polymerase which is found both free and covalently attached to the genomic RNA. May also contain guanylyl and methyl transferase activities. The chain is RNA-directed RNA polymerase (VP1) from Blotched snakehead virus (BSNV).